The sequence spans 78 residues: Large ribosomal subunit protein bL28 (78 aa).

Residues 1–23 are disordered; sequence MSRVCQVSGKRVQTGNNVSHANN. Over residues 11–22 the composition is skewed to polar residues; that stretch reads RVQTGNNVSHAN.

This sequence belongs to the bacterial ribosomal protein bL28 family.

This chain is Large ribosomal subunit protein bL28, found in Xanthomonas campestris pv. campestris (strain 8004).